Consider the following 140-residue polypeptide: Organic hydroperoxide resistance protein-like 1 (140 aa).

It belongs to the OsmC/Ohr family.

The sequence is that of Organic hydroperoxide resistance protein-like 1 from Staphylococcus epidermidis (strain ATCC 35984 / DSM 28319 / BCRC 17069 / CCUG 31568 / BM 3577 / RP62A).